A 176-amino-acid polypeptide reads, in one-letter code: Sigma intracellular receptor 2 (176 aa).

The Cytoplasmic segment spans residues 1–9 (MGALAARRC). Residues 10–30 (VEWLLGLYFVSHIPITLFIDL) form a helical membrane-spanning segment. Residues 10-158 (VEWLLGLYFV…PYLIIPLILL (149 aa)) form the EXPERA domain. Topologically, residues 31–68 (QAVLPPELYPQEFSNLLRWYSKEFKDPLMQEPPVWFKS) are lumenal. The helical transmembrane segment at 69–89 (FLLCELVFQLPFFPIAAYAFF) threads the bilayer. 2 residues coordinate cholesterol: Val75 and Gln77. The Cytoplasmic portion of the chain corresponds to 90–99 (KGSCRWIRIP). Residues 100–120 (AIIYAAHTITTLIPILYTLLF) form a helical membrane-spanning segment. Topologically, residues 121–140 (EDFSKAVAFKGQRPESFRER) are lumenal. The helical transmembrane segment at 141–161 (LTLVGVYAPYLIIPLILLLFM) threads the bilayer. Residues 162 to 176 (LRNPYYKYEEKRKKK) are Cytoplasmic-facing. Residues 172 to 176 (KRKKK) carry the ER retention motif motif.

It belongs to the TMEM97/sigma-2 receptor family. As to quaternary structure, homodimer. Interacts with NPC1; the interaction impairs NPC1-mediated cholesterol transport. Interacts with PGRMC1 and LDLR; the interaction increases LDL internalization. Interacts with histatin 1/HTN1; the interaction induces HTN1-stimulating wound healing. Interacts with TSPO.

It is found in the rough endoplasmic reticulum membrane. It localises to the nucleus membrane. In terms of biological role, sigma-2 receptor which contributes to ameliorate dysfunctional cellular processes and slow degenerative progression by regulating cell functions including cholesterol biosynthesis/trafficking, membrane trafficking, autophagy, lipid membrane-bound protein trafficking, and receptor stabilization at the cell surface. Forms a ternary complex with PGRMC1 receptor and low density lipoprotein receptor/LDLR at the plasma membrane, which increases LDLR-mediated LDL cholesterol internalization. Decreases lysosomal sterol transporter NPC1 availability to the cell, probably through NPC1-binding, hence controlling lipid transport, including cholesterol and LBPA, outside of late endosome/lysosome. Binds regio- and stereoselective ligand 20(S)-hydroxycholesterol (20(S)-OHC) which enhances TMEM97-NPC1 interaction and decreases TMEM97-PGRMC1 and TMEM97-TSPO interactions, thereby linking OHC binding to cholesterol homeostasis. Also able to bind cholesterol. Binds histatin 1 (Hst 1)/HN1 salivary peptide at the ER membrane, which is critical for increasing mitochondria-ER contacts and stimulating Hst1 wound healing properties. May alter the activity of some cytochrome P450 proteins. Although shows homologies with sterol isomerases (EXPERA domain), not able to catalyze sterol isomerization. However, may act as sensors of these molecules. Acts as a quality control factor in the ER, promoting the proteolytic degradation of nonproductive and extramitochondrial precursor proteins in the ER membrane thus removing them from the ER surface. This Mus musculus (Mouse) protein is Sigma intracellular receptor 2.